Consider the following 179-residue polypeptide: Large ribosomal subunit protein uL5 (179 aa).

It belongs to the universal ribosomal protein uL5 family. In terms of assembly, part of the 50S ribosomal subunit; part of the 5S rRNA/L5/L18/L25 subcomplex. Contacts the 5S rRNA and the P site tRNA. Forms a bridge to the 30S subunit in the 70S ribosome.

In terms of biological role, this is one of the proteins that bind and probably mediate the attachment of the 5S RNA into the large ribosomal subunit, where it forms part of the central protuberance. In the 70S ribosome it contacts protein S13 of the 30S subunit (bridge B1b), connecting the 2 subunits; this bridge is implicated in subunit movement. Contacts the P site tRNA; the 5S rRNA and some of its associated proteins might help stabilize positioning of ribosome-bound tRNAs. This is Large ribosomal subunit protein uL5 from Rickettsia bellii (strain OSU 85-389).